A 303-amino-acid chain; its full sequence is MFYGFDIGGSKIALGVYNAHRQLIWQRRVATPKDDYAQLLAAIDTLTQQADGFCGVRGSVGIGVPGLPIADDGTIFSANIPAARGRTLRADLSARLGREVRIDNDANCFALSEAWDDEFMQYPVVLGMILGTGVGGGLIVDGKPVTGRNYVVGELGHMRLPVDALRVLGRDIPLLPCGCGKYGCIEGYLSGNGFSWLWHYFYQKTHSAPEIIRRYYEGDTDALAHTERYRELLAVCLGNILTLLDPHLVVLGGGLSNFDALYDGLSERVSSHLLPVARPPRFERARHGDAGGMRGAAFLHLKF.

Residues 4–11 and 133–140 contribute to the ATP site; these read GFDIGGSK and GVGGGLIV. Zn(2+) is bound by residues histidine 157, cysteine 177, cysteine 179, and cysteine 184.

It belongs to the ROK (NagC/XylR) family. NagK subfamily.

It catalyses the reaction N-acetyl-D-glucosamine + ATP = N-acetyl-D-glucosamine 6-phosphate + ADP + H(+). The protein operates within cell wall biogenesis; peptidoglycan recycling. Functionally, catalyzes the phosphorylation of N-acetyl-D-glucosamine (GlcNAc) derived from cell-wall degradation, yielding GlcNAc-6-P. This is N-acetyl-D-glucosamine kinase from Erwinia tasmaniensis (strain DSM 17950 / CFBP 7177 / CIP 109463 / NCPPB 4357 / Et1/99).